Reading from the N-terminus, the 133-residue chain is ATP synthase epsilon chain, chloroplastic (133 aa).

Belongs to the ATPase epsilon chain family. In terms of assembly, F-type ATPases have 2 components, CF(1) - the catalytic core - and CF(0) - the membrane proton channel. CF(1) has five subunits: alpha(3), beta(3), gamma(1), delta(1), epsilon(1). CF(0) has three main subunits: a, b and c.

It localises to the plastid. It is found in the chloroplast thylakoid membrane. Its function is as follows. Produces ATP from ADP in the presence of a proton gradient across the membrane. This chain is ATP synthase epsilon chain, chloroplastic, found in Gossypium barbadense (Sea Island cotton).